A 129-amino-acid polypeptide reads, in one-letter code: Small ribosomal subunit protein uS11 (129 aa).

Belongs to the universal ribosomal protein uS11 family. Part of the 30S ribosomal subunit.

Functionally, located on the platform of the 30S subunit. The polypeptide is Small ribosomal subunit protein uS11 (Haloarcula marismortui (strain ATCC 43049 / DSM 3752 / JCM 8966 / VKM B-1809) (Halobacterium marismortui)).